A 617-amino-acid polypeptide reads, in one-letter code: Protelomerase (617 aa).

Arginine 270, lysine 295, arginine 376, and histidine 409 together coordinate DNA. Catalysis depends on tyrosine 418, which acts as the Nucleophile. The span at 535-562 (DAEEDEIEEDFTDEEIDDTEFDVSDNAS) shows a compositional bias: acidic residues. Residues 535 to 575 (DAEEDEIEEDFTDEEIDDTEFDVSDNASDEDKPEDKPRFAA) are disordered. Over residues 563 to 575 (DEDKPEDKPRFAA) the composition is skewed to basic and acidic residues.

Belongs to the Caudoviricetes Protelomerase family. Monomer. Homodimer; in presence of DNA.

Converts the circular intermediates produced by the viral replication and carrying a joined telomere site to a linear DNA molecule with covalently closed hairpin ends. The viral circular DNA is cleaved at a palindromic site called telRL thereby generating a linear prophage plasmid with telomeres. Binds covalently to the 3'-phosphoryl of the cleaved strands. In Yersinia enterocolitica (Bacteriophage PY54), this protein is Protelomerase (tel).